The primary structure comprises 382 residues: Lipid-A-disaccharide synthase (382 aa).

Belongs to the LpxB family.

It carries out the reaction 2-N,3-O-bis[(3R)-3-hydroxytetradecanoyl]-alpha-D-glucosaminyl 1-phosphate + UDP-2-N,3-O-bis[(3R)-3-hydroxytetradecanoyl]-alpha-D-glucosamine = lipid A disaccharide (E. coli) + UDP + H(+). The enzyme catalyses a lipid X + a UDP-2-N,3-O-bis[(3R)-3-hydroxyacyl]-alpha-D-glucosamine = a lipid A disaccharide + UDP + H(+). Its pathway is glycolipid biosynthesis; lipid IV(A) biosynthesis; lipid IV(A) from (3R)-3-hydroxytetradecanoyl-[acyl-carrier-protein] and UDP-N-acetyl-alpha-D-glucosamine: step 5/6. Its function is as follows. Condensation of UDP-2,3-diacylglucosamine and 2,3-diacylglucosamine-1-phosphate to form lipid A disaccharide, a precursor of lipid A, a phosphorylated glycolipid that anchors the lipopolysaccharide to the outer membrane of the cell. The chain is Lipid-A-disaccharide synthase from Enterobacter sp. (strain 638).